A 417-amino-acid polypeptide reads, in one-letter code: Aminoacyltransferase FemB (417 aa).

The protein belongs to the FemABX family.

The protein localises to the cytoplasm. It carries out the reaction MurNAc-L-Ala-D-isoglutaminyl-L-Lys-(N(6)-tri-Gly)-D-Ala-D-Ala-diphospho-di-trans,octa-cis-undecaprenyl-GlcNAc + 2 glycyl-tRNA(Gly) = MurNAc-L-Ala-D-isoglutaminyl-L-Lys-(N(6)-penta-Gly)-D-Ala-D-Ala-diphospho-di-trans,octa-cis-undecaprenyl-GlcNAc + 2 tRNA(Gly) + 2 H(+). Functionally, catalyzes the incorporation of amino acid(s) into the interchain peptide bridge of peptidoglycan, using aminoacyl-tRNA as amino acid donor. This chain is Aminoacyltransferase FemB (femB), found in Staphylococcus epidermidis.